A 205-amino-acid polypeptide reads, in one-letter code: Adenylyl-sulfate kinase (205 aa).

31-38 (GLSGAGKS) is a binding site for ATP. The active-site Phosphoserine intermediate is S105.

It belongs to the APS kinase family.

The catalysed reaction is adenosine 5'-phosphosulfate + ATP = 3'-phosphoadenylyl sulfate + ADP + H(+). Its pathway is sulfur metabolism; hydrogen sulfide biosynthesis; sulfite from sulfate: step 2/3. Functionally, catalyzes the synthesis of activated sulfate. In Shewanella denitrificans (strain OS217 / ATCC BAA-1090 / DSM 15013), this protein is Adenylyl-sulfate kinase.